The primary structure comprises 276 residues: Diaminopimelate epimerase (276 aa).

Residues Asn13, Gln46, and Asn66 each coordinate substrate. The active-site Proton donor is the Cys75. Substrate contacts are provided by residues Gly76–Asn77, Asn159, Asn192, and Glu210–Arg211. The active-site Proton acceptor is the Cys219. Gly220–Ser221 is a binding site for substrate.

This sequence belongs to the diaminopimelate epimerase family. As to quaternary structure, homodimer.

It is found in the cytoplasm. The enzyme catalyses (2S,6S)-2,6-diaminopimelate = meso-2,6-diaminopimelate. It participates in amino-acid biosynthesis; L-lysine biosynthesis via DAP pathway; DL-2,6-diaminopimelate from LL-2,6-diaminopimelate: step 1/1. Functionally, catalyzes the stereoinversion of LL-2,6-diaminopimelate (L,L-DAP) to meso-diaminopimelate (meso-DAP), a precursor of L-lysine and an essential component of the bacterial peptidoglycan. This chain is Diaminopimelate epimerase, found in Vibrio atlanticus (strain LGP32) (Vibrio splendidus (strain Mel32)).